The following is a 177-amino-acid chain: tRNA-splicing endonuclease (177 aa).

Catalysis depends on residues tyrosine 114, histidine 123, and lysine 154.

It belongs to the tRNA-intron endonuclease family. Archaeal short subfamily. Homotetramer; although the tetramer contains four active sites, only two participate in the cleavage. Therefore, it should be considered as a dimer of dimers.

The enzyme catalyses pretRNA = a 3'-half-tRNA molecule with a 5'-OH end + a 5'-half-tRNA molecule with a 2',3'-cyclic phosphate end + an intron with a 2',3'-cyclic phosphate and a 5'-hydroxyl terminus.. In terms of biological role, endonuclease that removes tRNA introns. Cleaves pre-tRNA at the 5'- and 3'-splice sites to release the intron. The products are an intron and two tRNA half-molecules bearing 2',3' cyclic phosphate and 5'-OH termini. Recognizes a pseudosymmetric substrate in which 2 bulged loops of 3 bases are separated by a stem of 4 bp. The sequence is that of tRNA-splicing endonuclease from Methanococcus maripaludis (strain DSM 14266 / JCM 13030 / NBRC 101832 / S2 / LL).